The chain runs to 219 residues: Ribose-5-phosphate isomerase A (219 aa).

Substrate is bound by residues S28 to T31, D81 to D84, and K94 to G97. E103 (proton acceptor) is an active-site residue. K121 contacts substrate.

This sequence belongs to the ribose 5-phosphate isomerase family. As to quaternary structure, homodimer.

The enzyme catalyses aldehydo-D-ribose 5-phosphate = D-ribulose 5-phosphate. It participates in carbohydrate degradation; pentose phosphate pathway; D-ribose 5-phosphate from D-ribulose 5-phosphate (non-oxidative stage): step 1/1. Functionally, catalyzes the reversible conversion of ribose-5-phosphate to ribulose 5-phosphate. The polypeptide is Ribose-5-phosphate isomerase A (Histophilus somni (strain 129Pt) (Haemophilus somnus)).